Reading from the N-terminus, the 168-residue chain is DNA-binding protein inhibitor ID-1 (168 aa).

Positions 46–98 constitute a bHLH domain; it reads LPALLDEQQVNVLLYDMNGCYSRLKELVPTLPQNRKVSKVEILQHVIDYIRDL. An interaction with IFI204 region spans residues 53–106; sequence QQVNVLLYDMNGCYSRLKELVPTLPQNRKVSKVEILQHVIDYIRDLQLELNSES. The short motif at 91-104 is the Nuclear export signal element; sequence VIDYIRDLQLELNS.

As to quaternary structure, heterodimer with other HLH proteins. Interacts with CLOCK and BMAL1. Interacts with COPS5, IFI204, GATA4 and NKX2-5. Polyubiquitinated; which is favored by Ifi204 and leads to proteasomal degradation.

The protein localises to the cytoplasm. Its subcellular location is the nucleus. Transcriptional regulator (lacking a basic DNA binding domain) which negatively regulates the basic helix-loop-helix (bHLH) transcription factors by forming heterodimers and inhibiting their DNA binding and transcriptional activity. Implicated in regulating a variety of cellular processes, including cellular growth, senescence, differentiation, apoptosis, angiogenesis, and neoplastic transformation. Inhibits skeletal muscle and cardiac myocyte differentiation. Regulates the circadian clock by repressing the transcriptional activator activity of the CLOCK-BMAL1 heterodimer. This chain is DNA-binding protein inhibitor ID-1 (Id1), found in Mus musculus (Mouse).